The sequence spans 163 residues: Nucleotide-binding protein Mvan_0997 (163 aa).

The protein belongs to the YajQ family.

Nucleotide-binding protein. The chain is Nucleotide-binding protein Mvan_0997 from Mycolicibacterium vanbaalenii (strain DSM 7251 / JCM 13017 / BCRC 16820 / KCTC 9966 / NRRL B-24157 / PYR-1) (Mycobacterium vanbaalenii).